Reading from the N-terminus, the 306-residue chain is Ribonuclease Z (306 aa).

Zn(2+) is bound by residues H63, H65, D67, H68, H140, D211, and H269. The active-site Proton acceptor is D67.

The protein belongs to the RNase Z family. As to quaternary structure, homodimer. The cofactor is Zn(2+).

The enzyme catalyses Endonucleolytic cleavage of RNA, removing extra 3' nucleotides from tRNA precursor, generating 3' termini of tRNAs. A 3'-hydroxy group is left at the tRNA terminus and a 5'-phosphoryl group is left at the trailer molecule.. Functionally, zinc phosphodiesterase, which displays some tRNA 3'-processing endonuclease activity. Probably involved in tRNA maturation, by removing a 3'-trailer from precursor tRNA. This Listeria monocytogenes serotype 4b (strain CLIP80459) protein is Ribonuclease Z.